The sequence spans 199 residues: Protein PPP1R35 homolog (199 aa).

A compositionally biased stretch (basic residues) spans 1–11 (MPHKRRNRVHA). Disordered regions lie at residues 1–23 (MPHK…RVSV) and 36–60 (ESCN…AMTN). The span at 38 to 49 (CNGSHADNSSPD) shows a compositional bias: polar residues.

It belongs to the PPP1R35 family. As to quaternary structure, interacts with Ana3; this complex is recruited to daughter centrioles before their conversion to centrosomes.

The protein localises to the cytoplasm. Its subcellular location is the cytoskeleton. It is found in the microtubule organizing center. It localises to the centrosome. The protein resides in the centriole. Functionally, participates in the later stages of centriole assembly through the interaction with Ana3 leading to the centriole to centrosome conversion in somatic cells. The chain is Protein PPP1R35 homolog from Drosophila melanogaster (Fruit fly).